Consider the following 247-residue polypeptide: MKNTELEQLINDKLNSAAISDYAPNGLQVEGKETVQKIVTGVTASQALLDEAVRLQADAVIVHHGYFWKGESPVIRGMKRRRLKTLLANDINLYGWHLPLDAHPELGNNAQLAALLGITVKGEIEPLVPWGELSMPVPGLELASWIEARLGRKPLWCGDTGPENVQRVAWCTGGGQSFIDSAARFGVDAFITGEVSEQTIHSAREQGLHFYAAGHHATERGGIRALSEWLNENTALDVTFIDIPNPA.

5 residues coordinate a divalent metal cation: H63, H64, D101, H215, and E219.

The protein belongs to the GTP cyclohydrolase I type 2/NIF3 family. Toroid-shaped homohexamer. In the hexamer, 3 dimers assemble to form a ring-like structure surrounding a central hole.

Functionally, provides significant protection from radiation damage and may be involved in the degradation of radiation-damaged nucleotides. The sequence is that of GTP cyclohydrolase 1 type 2 homolog (ybgI) from Salmonella typhi.